Reading from the N-terminus, the 2581-residue chain is Chromodomain-helicase-DNA-binding protein 8 (2581 aa).

5 disordered regions span residues 22–114 (DDSF…QTST), 253–283 (VKGSAPAGNPGATGPPLKPAVTLTSTPTQGE), 349–392 (QKIQ…SPGQ), 429–582 (ALSS…QVKR), and 596–615 (DEEEEEVDVTGPIKPEPILP). Polar residues-rich tracts occupy residues 42–51 (SLDSLDQMNQ) and 94–114 (DYTTQPASQEQPAQPVLQTST). The span at 255-267 (GSAPAGNPGATGP) shows a compositional bias: low complexity. The segment covering 355–370 (PQPPSSQPQPQQPPST) has biased composition (pro residues). Serine 432 is subject to Phosphoserine. Composition is skewed to basic and acidic residues over residues 445-462 (GMEENRRLEHQKKQEKAN) and 493-516 (RPEEEGEKKRRKKSAGERLKEEKP). 2 positions are modified to phosphoserine: serine 553 and serine 562. Basic residues predominate over residues 572 to 582 (QKRRSNRQVKR). Residue lysine 609 forms a Glycyl lysine isopeptide (Lys-Gly) (interchain with G-Cter in SUMO) linkage. Chromo domains lie at 642-709 (AIVD…AQMR) and 724-790 (VEVD…RVNR). Residues 823–997 (LFNWYNRQNC…FSLLHFLEPS (175 aa)) enclose the Helicase ATP-binding domain. 836–843 (DEMGLGKT) provides a ligand contact to ATP. The DEAH box signature appears at 948 to 951 (DEAH). One can recognise a Helicase C-terminal domain in the interval 1137 to 1288 (LIDKLLPKLK…KAVLQSMSGR (152 aa)). Phosphoserine is present on residues serine 1420 and serine 1424. The tract at residues 1692–1712 (EDPEYKPLQGPPKDQDDEGDP) is disordered. An interaction with FAM124B region spans residues 1789–2302 (IARREKQQRW…LVELEVECME (514 aa)). Phosphoserine is present on residues serine 1976 and serine 1978. Residues 1991–2116 (SRTASPLPLR…TDQSRSKLYD (126 aa)) are disordered. Threonine 1993 carries the phosphothreonine modification. 2 positions are modified to phosphoserine: serine 1995 and serine 2008. The span at 2011-2021 (ETATQVPSLES) shows a compositional bias: polar residues. Lysine 2025 is covalently cross-linked (Glycyl lysine isopeptide (Lys-Gly) (interchain with G-Cter in SUMO2)). Serine 2046 carries the phosphoserine modification. The residue at position 2051 (threonine 2051) is a Phosphothreonine. The span at 2064–2073 (EDEDDSDSEL) shows a compositional bias: acidic residues. Phosphoserine occurs at positions 2069 and 2071. A compositionally biased stretch (low complexity) spans 2076–2095 (SKLSPSSSSSSSSSSSSSST). The segment covering 2103-2116 (EEKLTDQSRSKLYD) has biased composition (basic and acidic residues). Residues serine 2182, serine 2200, and serine 2202 each carry the phosphoserine modification. The interval 2189-2229 (GILGPGNHLLDSPSLTPGEYGDSPVPTPRSSSAASMAEEEA) is disordered. Phosphothreonine is present on threonine 2204. At serine 2211 the chain carries Phosphoserine. Threonine 2215 is modified (phosphothreonine). The span at 2218–2229 (SSSAASMAEEEA) shows a compositional bias: low complexity. The residue at position 2223 (serine 2223) is a Phosphoserine. Lysine 2256 participates in a covalent cross-link: Glycyl lysine isopeptide (Lys-Gly) (interchain with G-Cter in SUMO2). A disordered region spans residues 2481-2581 (PSSPHVDSST…NSDSSEDADD (101 aa)). Basic residues predominate over residues 2492–2510 (LHHHHHHPHPHHHHHHHPG). Serine 2519 carries the phosphoserine modification. The segment covering 2519-2528 (SPVTTASGTT) has biased composition (polar residues). The segment covering 2536 to 2550 (PEEDDDEDEEDDDDL) has biased composition (acidic residues).

This sequence belongs to the SNF2/RAD54 helicase family. CHD8 subfamily. In terms of assembly, interacts with p53/TP53, histone H1, CTNNB1, CTCF and PIAS3. Component of some MLL1/MLL complex, at least composed of the core components KMT2A/MLL1, ASH2L, HCFC1/HCF1, WDR5 and RBBP5, as well as the facultative components BACC1, CHD8, E2F6, HSP70, INO80C, KANSL1, LAS1L, MAX, MCRS1, MGA, KAT8/MOF, PELP1, PHF20, PRP31, RING2, RUVB1/TIP49A, RUVB2/TIP49B, SENP3, TAF1, TAF4, TAF6, TAF7, TAF9 and TEX10. Interacts with CHD7. Interacts with FAM124B. Interacts with TLK2. Interacts with HNRNPL in an RNA-dependent manner. Post-translationally, sumoylated.

Its subcellular location is the nucleus. The catalysed reaction is ATP + H2O = ADP + phosphate + H(+). ATP-dependent chromatin-remodeling factor, it slides nucleosomes along DNA; nucleosome sliding requires ATP. Acts as a transcription repressor by remodeling chromatin structure and recruiting histone H1 to target genes. Suppresses p53/TP53-mediated apoptosis by recruiting histone H1 and preventing p53/TP53 transactivation activity. Acts as a negative regulator of Wnt signaling pathway by regulating beta-catenin (CTNNB1) activity. Negatively regulates CTNNB1-targeted gene expression by being recruited specifically to the promoter regions of several CTNNB1 responsive genes. Involved in both enhancer blocking and epigenetic remodeling at chromatin boundary via its interaction with CTCF. Acts as a suppressor of STAT3 activity by suppressing the LIF-induced STAT3 transcriptional activity. Also acts as a transcription activator via its interaction with ZNF143 by participating in efficient U6 RNA polymerase III transcription. Regulates alternative splicing of a core group of genes involved in neuronal differentiation, cell cycle and DNA repair. Enables H3K36me3-coupled transcription elongation and co-transcriptional RNA processing likely via interaction with HNRNPL. This Homo sapiens (Human) protein is Chromodomain-helicase-DNA-binding protein 8.